The chain runs to 264 residues: MNKLKLHGFNNLTKSLGFCIYDICYAQTFADRDGYIAYIDDEYNADRLTEILRETCSIIGANILNIARQDYNPQGASVTILISEEAIDPRDVDTSEHPGPLPDSIVAHLDKSHICVHTYPESHPTEGLCTFRADIEVSTCGIISPLNALNYLIHQLESDIVTIDYRVRGFTRDVNGVKHYIDHQINSIQNFMCKDIQSLYHMMDVNVYQENIFHTKMMLKDFDLKHYLFNSHPEQLSVQEKDLITKRLYKEMQEIYYGRNVVEV.

Ser-112 acts as the Schiff-base intermediate with substrate; via pyruvic acid in catalysis. Pyruvic acid (Ser); by autocatalysis is present on Ser-112. His-117 functions as the Proton acceptor; for processing activity in the catalytic mechanism. Cys-140 serves as the catalytic Proton donor; for catalytic activity.

Belongs to the prokaryotic AdoMetDC family. Type 2 subfamily. Heterooctamer of four alpha and four beta chains arranged as a tetramer of alpha/beta heterodimers. Pyruvate is required as a cofactor. In terms of processing, is synthesized initially as an inactive proenzyme. Formation of the active enzyme involves a self-maturation process in which the active site pyruvoyl group is generated from an internal serine residue via an autocatalytic post-translational modification. Two non-identical subunits are generated from the proenzyme in this reaction, and the pyruvate is formed at the N-terminus of the alpha chain, which is derived from the carboxyl end of the proenzyme. The post-translation cleavage follows an unusual pathway, termed non-hydrolytic serinolysis, in which the side chain hydroxyl group of the serine supplies its oxygen atom to form the C-terminus of the beta chain, while the remainder of the serine residue undergoes an oxidative deamination to produce ammonia and the pyruvoyl group blocking the N-terminus of the alpha chain.

It carries out the reaction S-adenosyl-L-methionine + H(+) = S-adenosyl 3-(methylsulfanyl)propylamine + CO2. The protein operates within amine and polyamine biosynthesis; S-adenosylmethioninamine biosynthesis; S-adenosylmethioninamine from S-adenosyl-L-methionine: step 1/1. Catalyzes the decarboxylation of S-adenosylmethionine to S-adenosylmethioninamine (dcAdoMet), the propylamine donor required for the synthesis of the polyamines spermine and spermidine from the diamine putrescine. This is S-adenosylmethionine decarboxylase proenzyme from Hamiltonella defensa subsp. Acyrthosiphon pisum (strain 5AT).